The chain runs to 901 residues: HTH-type transcriptional regulator MalT (901 aa).

39-46 (SPAGYGKT) serves as a coordination point for ATP. One can recognise an HTH luxR-type domain in the interval 829–894 (ELIRTSPLTQ…DAVQHAQQLL (66 aa)). The H-T-H motif DNA-binding region spans 853–872 (NEQIAGELAVAATTIKTHIR).

This sequence belongs to the MalT family. As to quaternary structure, monomer in solution. Oligomerizes to an active state in the presence of the positive effectors ATP and maltotriose.

Activated by ATP and maltotriose, which are both required for DNA binding. Functionally, positively regulates the transcription of the maltose regulon whose gene products are responsible for uptake and catabolism of malto-oligosaccharides. Specifically binds to the promoter region of its target genes, recognizing a short DNA motif called the MalT box. The polypeptide is HTH-type transcriptional regulator MalT (Salmonella choleraesuis (strain SC-B67)).